The following is a 96-amino-acid chain: Co-chaperonin GroES (96 aa).

The tract at residues 26–48 (LLPGSAQEKPSQGEVLATGNGQI) is disordered.

This sequence belongs to the GroES chaperonin family. In terms of assembly, heptamer of 7 subunits arranged in a ring. Interacts with the chaperonin GroEL.

It is found in the cytoplasm. In terms of biological role, together with the chaperonin GroEL, plays an essential role in assisting protein folding. The GroEL-GroES system forms a nano-cage that allows encapsulation of the non-native substrate proteins and provides a physical environment optimized to promote and accelerate protein folding. GroES binds to the apical surface of the GroEL ring, thereby capping the opening of the GroEL channel. The chain is Co-chaperonin GroES from Psychrobacter arcticus (strain DSM 17307 / VKM B-2377 / 273-4).